The chain runs to 151 residues: Nascent polypeptide-associated complex subunit beta (151 aa).

The 66-residue stretch at 32-97 (EQDDTKLMEA…PQEKDVTQLI (66 aa)) folds into the NAC-A/B domain. Residues 122–151 (GKTPSMGGENAGADEDIPDLIEGQKFDEVE) form a disordered region.

This sequence belongs to the NAC-beta family. Part of the nascent polypeptide-associated complex (NAC), consisting of EGD2 and EGD1. NAC associates with ribosomes via EGD1.

Its subcellular location is the cytoplasm. The protein resides in the nucleus. Component of the nascent polypeptide-associated complex (NAC), a dynamic component of the ribosomal exit tunnel, protecting the emerging polypeptides from interaction with other cytoplasmic proteins to ensure appropriate nascent protein targeting. The NAC complex also promotes mitochondrial protein import by enhancing productive ribosome interactions with the outer mitochondrial membrane and blocks the inappropriate interaction of ribosomes translating non-secretory nascent polypeptides with translocation sites in the membrane of the endoplasmic reticulum. EGD1 may act as a transcription factor that exert a negative effect on the expression of several genes that are transcribed by RNA polymerase II. The protein is Nascent polypeptide-associated complex subunit beta (EGD1) of Meyerozyma guilliermondii (strain ATCC 6260 / CBS 566 / DSM 6381 / JCM 1539 / NBRC 10279 / NRRL Y-324) (Yeast).